The primary structure comprises 899 residues: Protein translocase subunit SecA (899 aa).

ATP contacts are provided by residues Gln-87, 105 to 109 (GEGKT), and Asp-516. Residues Cys-884, Cys-886, Cys-895, and His-896 each contribute to the Zn(2+) site.

The protein belongs to the SecA family. As to quaternary structure, monomer and homodimer. Part of the essential Sec protein translocation apparatus which comprises SecA, SecYEG and auxiliary proteins SecDF. Other proteins may also be involved. It depends on Zn(2+) as a cofactor.

The protein resides in the cell inner membrane. The protein localises to the cytoplasm. The enzyme catalyses ATP + H2O + cellular proteinSide 1 = ADP + phosphate + cellular proteinSide 2.. Part of the Sec protein translocase complex. Interacts with the SecYEG preprotein conducting channel. Has a central role in coupling the hydrolysis of ATP to the transfer of proteins into and across the cell membrane, serving as an ATP-driven molecular motor driving the stepwise translocation of polypeptide chains across the membrane. The sequence is that of Protein translocase subunit SecA from Borreliella afzelii (strain PKo) (Borrelia afzelii).